The following is a 314-amino-acid chain: Ribonuclease Z (314 aa).

Zn(2+) is bound by residues His-63, His-65, Asp-67, His-68, His-142, Asp-205, and His-263. The active-site Proton acceptor is the Asp-67.

The protein belongs to the RNase Z family. As to quaternary structure, homodimer. It depends on Zn(2+) as a cofactor.

The enzyme catalyses Endonucleolytic cleavage of RNA, removing extra 3' nucleotides from tRNA precursor, generating 3' termini of tRNAs. A 3'-hydroxy group is left at the tRNA terminus and a 5'-phosphoryl group is left at the trailer molecule.. Its function is as follows. Zinc phosphodiesterase, which displays some tRNA 3'-processing endonuclease activity. Probably involved in tRNA maturation, by removing a 3'-trailer from precursor tRNA. This Kineococcus radiotolerans (strain ATCC BAA-149 / DSM 14245 / SRS30216) protein is Ribonuclease Z.